The chain runs to 1049 residues: Protein phosphatase Slingshot homolog 1 (1049 aa).

Positions 1–12 (MALVTLQRSPTP) are enriched in polar residues. The tract at residues 1-28 (MALVTLQRSPTPSAASSSASNSELEAGS) is disordered. Ala2 is modified (N-acetylalanine). A compositionally biased stretch (low complexity) spans 13 to 25 (SAASSSASNSELE). 2 positions are modified to phosphoserine: Ser37 and Ser57. Positions 249 to 304 (ERTERLIKAKLRSIMMSQDLENVTSKEIRNELEKQMNCNLKELKEFIDNEMLLILG) constitute a DEK-C domain. The 142-residue stretch at 308-449 (KPSLIFDHLY…LSEYEGILDA (142 aa)) folds into the Tyrosine-protein phosphatase domain. Residue Cys393 is the Phosphocysteine intermediate of the active site. The disordered stretch occupies residues 456–499 (KLWRQQTDSSLQQPVDDPAGPGDFLPETPDGTPESQLPFLDDAA). Residues 458-468 (WRQQTDSSLQQ) show a composition bias toward polar residues. Ser515 is modified (phosphoserine). Disordered regions lie at residues 544–603 (AAPP…RWGQ), 693–787 (HLAS…KPAK), 825–899 (HTKE…KSPP), and 923–955 (PTSS…KQRT). Residues 564-573 (CEKDVKKKLE) are compositionally biased toward basic and acidic residues. Ser576 is modified (phosphoserine). Over residues 731-742 (GAALEPPASLLE) the composition is skewed to low complexity. Basic and acidic residues predominate over residues 772–787 (VIKEESSPKKDMKPAK). Ser897 is subject to Phosphoserine. The interval 897-1049 (SPPPFFYRLD…LKSPSWMSKS (153 aa)) is interaction with YWHAG. Positions 925-943 (SSSMSSNLTRSSSSDSIHS) are enriched in low complexity. A Phosphoserine modification is found at Ser978. The segment at 989-1049 (TEDLSSEADP…LKSPSWMSKS (61 aa)) is disordered. A compositionally biased stretch (polar residues) spans 1001 to 1013 (VADSQDTTLSESS).

It belongs to the protein-tyrosine phosphatase family. Interacts with actin and this stimulates phosphatase activity. Also interacts with LIMK1 and with the 14-3-3 proteins YWHAB, YWHAG, YWHAQ, and YWHAZ. Interaction with 14-3-3 proteins inhibits phosphatase activity and also blocks recruitment to lamellipodia and stimulation by actin. Post-translationally, phosphorylated. Inhibitory phosphorylation by PAK4 promotes binding to YWHAZ. Phosphorylation at Ser-978 is decreased by stimuli which promote actin reorganization and lamellipodia formation. Can be dephosphorylated and activated by PPP3CA/calcineurin A. Phosphorylation decreases immediately prior to telophase.

It is found in the cytoplasm. It localises to the cytoskeleton. The protein resides in the cell projection. Its subcellular location is the lamellipodium. The protein localises to the cleavage furrow. It is found in the midbody. The catalysed reaction is O-phospho-L-tyrosyl-[protein] + H2O = L-tyrosyl-[protein] + phosphate. It catalyses the reaction O-phospho-L-seryl-[protein] + H2O = L-seryl-[protein] + phosphate. The enzyme catalyses O-phospho-L-threonyl-[protein] + H2O = L-threonyl-[protein] + phosphate. Protein phosphatase which regulates actin filament dynamics. Dephosphorylates and activates the actin binding/depolymerizing factor cofilin, which subsequently binds to actin filaments and stimulates their disassembly. Inhibitory phosphorylation of cofilin is mediated by LIMK1, which may also be dephosphorylated and inactivated by this protein. This is Protein phosphatase Slingshot homolog 1 from Homo sapiens (Human).